We begin with the raw amino-acid sequence, 188 residues long: Peptidyl-tRNA hydrolase (188 aa).

Tyr-14 contributes to the tRNA binding site. Residue His-19 is the Proton acceptor of the active site. TRNA is bound by residues Phe-64, Asn-66, and Asn-112.

It belongs to the PTH family. As to quaternary structure, monomer.

The protein resides in the cytoplasm. It carries out the reaction an N-acyl-L-alpha-aminoacyl-tRNA + H2O = an N-acyl-L-amino acid + a tRNA + H(+). Hydrolyzes ribosome-free peptidyl-tRNAs (with 1 or more amino acids incorporated), which drop off the ribosome during protein synthesis, or as a result of ribosome stalling. Functionally, catalyzes the release of premature peptidyl moieties from peptidyl-tRNA molecules trapped in stalled 50S ribosomal subunits, and thus maintains levels of free tRNAs and 50S ribosomes. The protein is Peptidyl-tRNA hydrolase of Enterococcus faecalis (strain ATCC 700802 / V583).